The chain runs to 347 residues: Holliday junction branch migration complex subunit RuvB (347 aa).

The large ATPase domain (RuvB-L) stretch occupies residues 13–195 (NEDAVTSGEV…FGIVEHMQYY (183 aa)). Residues Leu-34, Arg-35, Gly-76, Lys-79, Thr-80, Thr-81, 142 to 144 (EDY), Arg-185, Tyr-195, and Arg-232 each bind ATP. Thr-80 serves as a coordination point for Mg(2+). Positions 196–266 (TIDELEKIVQ…TTEGALKQLQ (71 aa)) are small ATPAse domain (RuvB-S). Residues 269–347 (DEGLDQTDRR…QLGLPVPGDK (79 aa)) are head domain (RuvB-H). Residue Arg-329 participates in DNA binding.

Belongs to the RuvB family. In terms of assembly, homohexamer. Forms an RuvA(8)-RuvB(12)-Holliday junction (HJ) complex. HJ DNA is sandwiched between 2 RuvA tetramers; dsDNA enters through RuvA and exits via RuvB. An RuvB hexamer assembles on each DNA strand where it exits the tetramer. Each RuvB hexamer is contacted by two RuvA subunits (via domain III) on 2 adjacent RuvB subunits; this complex drives branch migration. In the full resolvosome a probable DNA-RuvA(4)-RuvB(12)-RuvC(2) complex forms which resolves the HJ.

It localises to the cytoplasm. The enzyme catalyses ATP + H2O = ADP + phosphate + H(+). Functionally, the RuvA-RuvB-RuvC complex processes Holliday junction (HJ) DNA during genetic recombination and DNA repair, while the RuvA-RuvB complex plays an important role in the rescue of blocked DNA replication forks via replication fork reversal (RFR). RuvA specifically binds to HJ cruciform DNA, conferring on it an open structure. The RuvB hexamer acts as an ATP-dependent pump, pulling dsDNA into and through the RuvAB complex. RuvB forms 2 homohexamers on either side of HJ DNA bound by 1 or 2 RuvA tetramers; 4 subunits per hexamer contact DNA at a time. Coordinated motions by a converter formed by DNA-disengaged RuvB subunits stimulates ATP hydrolysis and nucleotide exchange. Immobilization of the converter enables RuvB to convert the ATP-contained energy into a lever motion, pulling 2 nucleotides of DNA out of the RuvA tetramer per ATP hydrolyzed, thus driving DNA branch migration. The RuvB motors rotate together with the DNA substrate, which together with the progressing nucleotide cycle form the mechanistic basis for DNA recombination by continuous HJ branch migration. Branch migration allows RuvC to scan DNA until it finds its consensus sequence, where it cleaves and resolves cruciform DNA. The sequence is that of Holliday junction branch migration complex subunit RuvB from Lactobacillus helveticus (strain DPC 4571).